Here is a 207-residue protein sequence, read N- to C-terminus: NADH-quinone oxidoreductase subunit C (207 aa).

This sequence belongs to the complex I 30 kDa subunit family. In terms of assembly, NDH-1 is composed of 14 different subunits. Subunits NuoB, C, D, E, F, and G constitute the peripheral sector of the complex.

It is found in the cell inner membrane. It carries out the reaction a quinone + NADH + 5 H(+)(in) = a quinol + NAD(+) + 4 H(+)(out). In terms of biological role, NDH-1 shuttles electrons from NADH, via FMN and iron-sulfur (Fe-S) centers, to quinones in the respiratory chain. The immediate electron acceptor for the enzyme in this species is believed to be ubiquinone. Couples the redox reaction to proton translocation (for every two electrons transferred, four hydrogen ions are translocated across the cytoplasmic membrane), and thus conserves the redox energy in a proton gradient. The chain is NADH-quinone oxidoreductase subunit C from Thermus thermophilus (strain ATCC BAA-163 / DSM 7039 / HB27).